Consider the following 419-residue polypeptide: Gustatory receptor for sugar taste 64c (419 aa).

The Cytoplasmic portion of the chain corresponds to 1 to 15 (MQQSGQKGTRNTLQH). The helical transmembrane segment at 16-36 (AIGPVLVIAQFFGVLPVAGVW) threads the bilayer. Topologically, residues 37-48 (PSCRPERVRFRW) are extracellular. A helical transmembrane segment spans residues 49–69 (ISLSLLAALILFVFSIVDCAL). At 70-82 (SSKVVFDHGLKIY) the chain is on the cytoplasmic side. The chain crosses the membrane as a helical span at residues 83–103 (TIGSLSFSVICIFCFGVFLLL). The Extracellular portion of the chain corresponds to 104–139 (SRRWPYIIRRTAECEQIFLEPEYDCSYGRGYSSRLR). The helical transmembrane segment at 140 to 160 (LWGVCMLVAALCEHSTYVGSA) threads the bilayer. Residues 161 to 204 (LYNNHLAIVECKLDANFWQNYFQRERQQLFLIMHFTAWWIPFIE) lie on the Cytoplasmic side of the membrane. A helical membrane pass occupies residues 205–225 (WTTLSMTFVWNFVDIFLILIC). The Extracellular portion of the chain corresponds to 226 to 305 (RGMQMRFQQM…FQSKGNYADE (80 aa)). Residues 306–326 (LYFWFCLSYVIIRVLNMMFAA) form a helical membrane-spanning segment. The Cytoplasmic segment spans residues 327–377 (SSIPQEAKEISYTLYEIPTEFWCVELRRLNEIFLSDHFALSGKGYFLLTRR). A helical membrane pass occupies residues 378-398 (LIFAMAATLMVYELVLINQMA). The Extracellular portion of the chain corresponds to 399–419 (GSEVQKSFCEGGVGSSKSIFS).

It belongs to the insect chemoreceptor superfamily. Gustatory receptor (GR) family. Gr5a subfamily. Expressed in Gr5a-expressing sugar-sensing cells.

It localises to the cell membrane. One of the few identified sugar gustatory receptors identified so far and which promotes the starvation-induced increase of feeding motivation. This Drosophila melanogaster (Fruit fly) protein is Gustatory receptor for sugar taste 64c (Gr64c).